The sequence spans 294 residues: Ethylene-inducing xylanase 3 (294 aa).

Residues Met1 to Ala19 form the signal peptide. The 196-residue stretch at Gln31–Ala226 folds into the GH11 domain. Glu122 functions as the Nucleophile in the catalytic mechanism. The active-site Proton donor is Glu213. One can recognise a CBM1 domain in the interval Ser259–Leu294.

Belongs to the glycosyl hydrolase 11 (cellulase G) family.

It catalyses the reaction Endohydrolysis of (1-&gt;4)-beta-D-xylosidic linkages in xylans.. It functions in the pathway glycan degradation; xylan degradation. In terms of biological role, endo-1,4-beta-xylanase involved in the hydrolysis of xylan, a major structural heterogeneous polysaccharide found in plant biomass representing the second most abundant polysaccharide in the biosphere, after cellulose. Exhibits immunity-inducing activity in Nicotiana benthamiana. Can induce strong oxidative burst, activate the expression of defense-related genes, and increase resistance against oomycete and fungal pathogens in N.benthamiana. The polypeptide is Ethylene-inducing xylanase 3 (Verticillium dahliae (strain VdLs.17 / ATCC MYA-4575 / FGSC 10137) (Verticillium wilt)).